The sequence spans 417 residues: Putative nickel insertion protein (417 aa).

The disordered stretch occupies residues 69–99 (HEHHHDHGHHHHGHGHHHDHTHDHHHHHEHR). The span at 74–99 (DHGHHHHGHGHHHDHTHDHHHHHEHR) shows a compositional bias: basic residues.

This sequence belongs to the LarC family.

The chain is Putative nickel insertion protein from Maridesulfovibrio salexigens (strain ATCC 14822 / DSM 2638 / NCIMB 8403 / VKM B-1763) (Desulfovibrio salexigens).